Here is a 555-residue protein sequence, read N- to C-terminus: Solute carrier family 22 member 2 (555 aa).

The Cytoplasmic portion of the chain corresponds to 1 to 21; that stretch reads MPTTVDDVLEHGGEFHFFQKQ. Residues 22 to 42 form a helical membrane-spanning segment; sequence MFFLLALLSATFTPIYVGIVF. Topologically, residues 43–150 are extracellular; sequence LGFTPDHRCR…LVCANSWMLD (108 aa). The N-linked (GlcNAc...) asparagine glycan is linked to Asn72. The chain crosses the membrane as a helical span at residues 151-171; it reads LFQASVNVGFFFGSVSIGYIA. Over 172–177 the chain is Cytoplasmic; it reads DRFGRK. A helical transmembrane segment spans residues 178 to 198; the sequence is LCLLTTVLINAAAGVLMAISP. Topologically, residues 199–210 are extracellular; that stretch reads TYTWMLIFRLIQ. Residues 211–231 form a helical membrane-spanning segment; the sequence is GLVSKAGWLIGYILITEFVGR. The Cytoplasmic portion of the chain corresponds to 232-238; that stretch reads RYRRTVG. A helical transmembrane segment spans residues 239 to 259; the sequence is IFYQVAYTVGLLVLAGVAYAL. Residues 260 to 263 are Extracellular-facing; the sequence is PHWR. A helical transmembrane segment spans residues 264–284; that stretch reads WLQFTVTLPNFFFLLYYWCIP. Positions 284 to 288 match the Proline-rich sequence motif; the sequence is PESPR. Residues 285 to 348 are Cytoplasmic-facing; that stretch reads ESPRWLISQN…VRTPQIRKHT (64 aa). The helical transmembrane segment at 349–369 threads the bilayer; it reads MILMYNWFTSSVLYQGLIMHM. At 370 to 375 the chain is on the extracellular side; that stretch reads GLAGDN. Residues 376-396 traverse the membrane as a helical segment; it reads IYLDFFYSALVEFPAAFMIIV. Residues 397–404 lie on the Cytoplasmic side of the membrane; that stretch reads TIDRIGRR. The helical transmembrane segment at 405–425 threads the bilayer; it reads YPWAASNMVAGAACLASVFIP. Topologically, residues 426–432 are extracellular; the sequence is GDLQWLK. A helical transmembrane segment spans residues 433–453; that stretch reads IIISCLGRMGITMAYEIVRLV. Residues 454-464 lie on the Cytoplasmic side of the membrane; the sequence is NAELYPTFIRN. Residues 465–485 traverse the membrane as a helical segment; the sequence is LGVHICSSMCDIGGIITPFLV. Over 486–494 the chain is Extracellular; it reads YRLTNIWLE. Residues 495–515 traverse the membrane as a helical segment; that stretch reads LPLMVFGVLGLVAGGLVLLLP. Over 516-555 the chain is Cytoplasmic; the sequence is ETKGKALPETIEEAENMQRPRKNKEKMIYLQVQKLDIPLN.

This sequence belongs to the major facilitator (TC 2.A.1) superfamily. Organic cation transporter (TC 2.A.1.19) family. Tyrosine phosphorylated.

It localises to the basolateral cell membrane. The protein resides in the basal cell membrane. Its subcellular location is the apical cell membrane. The enzyme catalyses (R)-noradrenaline(out) = (R)-noradrenaline(in). It carries out the reaction (R)-adrenaline(out) = (R)-adrenaline(in). It catalyses the reaction serotonin(out) = serotonin(in). The catalysed reaction is dopamine(out) = dopamine(in). The enzyme catalyses histamine(out) = histamine(in). It carries out the reaction thiamine(in) = thiamine(out). It catalyses the reaction creatinine(in) = creatinine(out). The catalysed reaction is 1-methylnicotinamide(out) = 1-methylnicotinamide(in). The enzyme catalyses guanidine(out) = guanidine(in). It carries out the reaction choline(out) = choline(in). It catalyses the reaction agmatine(out) = agmatine(in). The catalysed reaction is putrescine(out) = putrescine(in). The enzyme catalyses spermidine(in) = spermidine(out). It carries out the reaction tyramine(in) = tyramine(out). It catalyses the reaction L-histidyl-L-proline diketopiperazine(in) = L-histidyl-L-proline diketopiperazine(out). The catalysed reaction is (R)-salsolinol(in) = (R)-salsolinol(out). The enzyme catalyses N-methyl-(R)-salsolinol(in) = N-methyl-(R)-salsolinol(out). It carries out the reaction acetylcholine(in) = acetylcholine(out). It catalyses the reaction prostaglandin F2alpha(out) = prostaglandin F2alpha(in). The catalysed reaction is prostaglandin E2(out) = prostaglandin E2(in). Its activity is regulated as follows. Tyrosine phosphorylation of the transporter leads to activation of the transport activity. Inhibited by cGMP, most likely through a cGMP-binding protein that interacts with OCT2. Its function is as follows. Electrogenic voltage-dependent transporter that mediates the transport of a variety of organic cations such as endogenous bioactive amines, cationic drugs and xenobiotics. Functions as a Na(+)-independent, bidirectional uniporter. Cation cellular uptake or release is driven by the electrochemical potential, i.e. membrane potential and concentration gradient. However, may also engage electroneutral cation exchange when saturating concentrations of cation substrates are reached. Predominantly expressed at the basolateral membrane of hepatocytes and proximal tubules and involved in the uptake and disposition of cationic compounds by hepatic and renal clearance from the blood flow. Implicated in monoamine neurotransmitters uptake such as histamine, dopamine, adrenaline/epinephrine, noradrenaline/norepinephrine, serotonin and tyramine, thereby supporting a physiological role in the central nervous system by regulating interstitial concentrations of neurotransmitters. Also capable of transporting dopaminergic neuromodulators cyclo(his-pro), salsolinol and N-methyl-salsolinol, thereby involved in the maintenance of dopaminergic cell integrity in the central nervous system. Mediates the bidirectional transport of acetylcholine (ACh) at the apical membrane of ciliated cell in airway epithelium, thereby playing a role in luminal release of ACh from bronchial epithelium. Also transports guanidine and endogenous monoamines such as vitamin B1/thiamine, creatinine and N-1-methylnicotinamide (NMN). Mediates the uptake and efflux of quaternary ammonium compound choline. Mediates the bidirectional transport of polyamine agmatine and the uptake of polyamines putrescine and spermidine. Able to transport non-amine endogenous compounds such as prostaglandin E2 (PGE2) and prostaglandin F2-alpha (PGF2-alpha). Also involved in the uptake of xenobiotic 4-(4-(dimethylamino)styryl)-N-methylpyridinium (ASP). May contribute to regulate the transport of organic compounds in testis across the blood-testis-barrier. In Pongo abelii (Sumatran orangutan), this protein is Solute carrier family 22 member 2 (SLC22A2).